The sequence spans 191 residues: dCTP deaminase, dUMP-forming (191 aa).

DCTP-binding positions include 101-106 (KSSLGR), D119, 127-129 (TLE), Q148, Y162, and Q174. The active-site Proton donor/acceptor is the E129. Positions 169–191 (NRYQGQRGPTASRSHLNFHRTRI) are disordered. A compositionally biased stretch (polar residues) spans 171–183 (YQGQRGPTASRSH).

Belongs to the dCTP deaminase family. Homotrimer.

The catalysed reaction is dCTP + 2 H2O = dUMP + NH4(+) + diphosphate. It participates in pyrimidine metabolism; dUMP biosynthesis; dUMP from dCTP: step 1/1. Its function is as follows. Bifunctional enzyme that catalyzes both the deamination of dCTP to dUTP and the hydrolysis of dUTP to dUMP without releasing the toxic dUTP intermediate. This is dCTP deaminase, dUMP-forming from Pseudarthrobacter chlorophenolicus (strain ATCC 700700 / DSM 12829 / CIP 107037 / JCM 12360 / KCTC 9906 / NCIMB 13794 / A6) (Arthrobacter chlorophenolicus).